A 237-amino-acid chain; its full sequence is Phosphoribosylaminoimidazole-succinocarboxamide synthase (237 aa).

It belongs to the SAICAR synthetase family.

It carries out the reaction 5-amino-1-(5-phospho-D-ribosyl)imidazole-4-carboxylate + L-aspartate + ATP = (2S)-2-[5-amino-1-(5-phospho-beta-D-ribosyl)imidazole-4-carboxamido]succinate + ADP + phosphate + 2 H(+). The protein operates within purine metabolism; IMP biosynthesis via de novo pathway; 5-amino-1-(5-phospho-D-ribosyl)imidazole-4-carboxamide from 5-amino-1-(5-phospho-D-ribosyl)imidazole-4-carboxylate: step 1/2. The sequence is that of Phosphoribosylaminoimidazole-succinocarboxamide synthase from Pseudomonas fluorescens (strain Pf0-1).